A 362-amino-acid chain; its full sequence is Vignain (362 aa).

Residues 1-20 (MAMKKLLWVVLSLSLVLGVA) form the signal peptide. Positions 21-126 (NSFDFHEKDL…SGTFMYEKVG (106 aa)) are cleaved as a propeptide — activation peptide. Intrachain disulfides connect C149–C191, C183–C224, and C282–C334. C152 is an active-site residue. Catalysis depends on residues H288 and N309. N-linked (GlcNAc...) asparagine glycans are attached at residues N326 and N346. Positions 353–362 (GSLSSPKDEL) are cleaved as a propeptide — removed in mature form. A Prevents secretion from ER motif is present at residues 359-362 (KDEL).

Belongs to the peptidase C1 family. In terms of processing, the mature protein is not glycosylated. Post-translationally, the precursor stored in the endoplasmic reticulum lumen is processed during the transport to proteins bodies to two dominant mature forms that differ by a single amino acid residue at the N-terminus.

It is found in the endoplasmic reticulum lumen. Its subcellular location is the vacuole. The protein localises to the aleurone grain. In terms of biological role, thought to be involved in the hydrolysis of stored seed proteins. In vitro, catalyzes the hydrolysis of proteins, such as azocasein. Shows a preferential cleavage for Asn-|-Xaa in small molecule substrates such as Boc-Asn-|-OPHNO(2). This is Vignain from Vigna mungo (Black gram).